The following is a 281-amino-acid chain: Bifunctional protein FolD (281 aa).

NADP(+) contacts are provided by residues 165–167 (GRG), Thr192, and Val233.

The protein belongs to the tetrahydrofolate dehydrogenase/cyclohydrolase family. Homodimer.

It carries out the reaction (6R)-5,10-methylene-5,6,7,8-tetrahydrofolate + NADP(+) = (6R)-5,10-methenyltetrahydrofolate + NADPH. The catalysed reaction is (6R)-5,10-methenyltetrahydrofolate + H2O = (6R)-10-formyltetrahydrofolate + H(+). Its pathway is one-carbon metabolism; tetrahydrofolate interconversion. Functionally, catalyzes the oxidation of 5,10-methylenetetrahydrofolate to 5,10-methenyltetrahydrofolate and then the hydrolysis of 5,10-methenyltetrahydrofolate to 10-formyltetrahydrofolate. This chain is Bifunctional protein FolD, found in Mycobacterium tuberculosis (strain ATCC 25177 / H37Ra).